A 1510-amino-acid chain; its full sequence is MSDVFELENEIELESDEVIMENENVEEIVDAPMPFSMTTNNGVERGKFRSLTLINWNGFFARTFDLDELVTTLSGGNGAGKSTTMAGFVTALIPDLTLLHFRNTTEAGSTGGSRDKGLHGKLRPGVCYAVLDTINSRHQRILVGVRLQQIAGRDKKVDLKTFSIQGVELSQNPTALFTETVGERQARVLNLNELKDKIENIGAQFKQYHSITDYHGMMFDLGIIPKRLRSASDRSKFYKLIEASLYGGISSAITRSLRDYLLPENLGVRKAFQDMESALRENRMTLEAIKVTQSDRNLFKHLITETTNYVASDYMRNANERRGNIEAALESRREWYKAKAEQNLSQHRLVDLSREAAELAENERTLEVDHQSAVDHLNLVLNALRHQEKITRYQEDIAELTERLEEQKIVVEDANDALEESQAQFEQTEIEIDAVRAQLADYQQALDAQQTRALQYQQAITALEKAKTLCGLADLSVKNVEDYHAEFEAHAESLTETVLELEHKMSISEAAKSQFDKAYQLVCKIAGEIPRSSAWESAKELLREYPSQKLQAQQTPQLRTKLHELEQRYAQQQSAVKLLNDFNQRANLSLQTAEELEDYHAEQEALIEDISARLSEQVENRSTLRQKRENLTALYDENARKAPAWLTAQAALERLEQQSGETFEHSQDVMNFMQSQLVKERELTMQRDQLEQKRLQLDEQISRLSQPDGSEDPRLNMLAERFGGVLLSELYDDVTIEDAPYFSALYGPARHAIVVRDLNAVREQLAQLEDCPDDLYLIEGDPTAFDDSVLSAQELELGVVVQVSDRELRYSRFPEIPLFGRAAREKRLEELQIERDEVAEQYAQIAFDVQKCQRLHEHFSQFVGLHLALAFQPNPEELMSEINRERNEIDRELNQFNNGEQQLRIQLDNAKEKLQLLNKLIPQLNVLTDEDLIDRIEECREQLDIAEQDEYFIRQYGVTLSQLEPIANSLQSDPENYDGLKNELTQAIERQKQVQQRVFALADVVQRKHHFGYEDAGQAKTSELNEKLRQRLEQMQAQRDMQREQVRQKQSQFAEYNRVLIQLQSSYDSKYQLLNELISEISDLGVRADDGAEERARIRRDELHQQLSTSRQRRSYVEKQLTLIESEADNLNRLIRKTERDYKTQRELVVAAKVSWCVVLRLSRNSDMEKRLNRRELAYLSADELRSMSDKALGALRTAVADNEYLRDSLRVSEDSRKPENKVRFFIAVYQHLRERIRQDIIKTDDPIDAIEQMEIELSRLTAELTGREKKLAISSESVANIMRKTIQREQNRIRMLNQGLQNISFGQVKSVRLVVNIRDTHAMLLDALSGQQDEYQDLFNDNCITFSEAMAKLYQRINPHIDMGQRTAQTIGEELLDYRNYLELEVEVFRGADGWLRAESGALSTGEAIGTGMSILLMVVQSWEEESRRIRGKDIVPCRLLFLDEAARLDGKSISTLFELCERLDMQLLIAAPENISPEKGTTYKLVRKIAGNQEHVHVVGLRGFGATE.

The stretch at 6 to 30 (ELENEIELESDEVIMENENVEEIVD) forms a coiled coil. 75-82 (GGNGAGKS) serves as a coordination point for ATP. Coiled-coil stretches lie at residues 346–506 (QHRL…HKMS), 553–633 (QQTP…NLTA), 673–706 (MQSQLVKERELTMQRDQLEQKRLQLDEQISRLSQ), 821–847 (RAAREKRLEELQIERDEVAEQYAQIAF), 876–1064 (EELM…IQLQ), 1094–1149 (ERAR…RELV), and 1249–1305 (DAIE…QNIS). Positions 707–824 (PDGSEDPRLN…EIPLFGRAAR (118 aa)) are flexible hinge.

It belongs to the SMC family. MukB subfamily. Homodimerization via its hinge domain. Binds to DNA via its C-terminal region. Interacts, and probably forms a ternary complex, with MukE and MukF via its C-terminal region. The complex formation is stimulated by calcium or magnesium. Interacts with tubulin-related protein FtsZ.

The protein resides in the cytoplasm. It localises to the nucleoid. Functionally, plays a central role in chromosome condensation, segregation and cell cycle progression. Functions as a homodimer, which is essential for chromosome partition. Involved in negative DNA supercoiling in vivo, and by this means organize and compact chromosomes. May achieve or facilitate chromosome segregation by condensation DNA from both sides of a centrally located replisome during cell division. The protein is Chromosome partition protein MukB of Haemophilus influenzae (strain 86-028NP).